Reading from the N-terminus, the 720-residue chain is Proline-rich receptor-like protein kinase PERK12 (720 aa).

The segment at 1 to 240 (MSDLGESPSS…GNGDGGGGGG (240 aa)) is disordered. Residues 1–246 (MSDLGESPSS…GGGGGYQGKT (246 aa)) are Extracellular-facing. Positions 10–25 (SSPPAPPADTAPPPET) are enriched in pro residues. Residues 26-35 (PSENSALPPV) are compositionally biased toward low complexity. Composition is skewed to pro residues over residues 52–84 (LSEP…PSDS) and 92–116 (PSPP…PAPP). An N-linked (GlcNAc...) asparagine glycan is attached at N117. Composition is skewed to pro residues over residues 123–138 (NPPP…PSSP) and 147–207 (PESP…PPKT). The chain crosses the membrane as a helical span at residues 247–267 (MVGMAVAGFAIMALIGVVFLV). Topologically, residues 268 to 720 (RRKKKRNIDS…ETRPFNNRRF (453 aa)) are cytoplasmic. Positions 300–349 (QDPGKGYSSGPNGSMYNNSQQQQSSMGNSYGTAGGGYPHHQMQSSGTPDS) are disordered. A compositionally biased stretch (low complexity) spans 311 to 330 (NGSMYNNSQQQQSSMGNSYG). Residues 371 to 624 (FARKNILGEG…EVFRMIETAA (254 aa)) form the Protein kinase domain. ATP-binding positions include 377-385 (LGEGGFGCV) and K399. At Y444 the chain carries Phosphotyrosine. The active-site Proton acceptor is the D495. A Phosphoserine modification is found at S528. Residues T529 and T534 each carry the phosphothreonine modification. A Phosphotyrosine modification is found at Y542. The disordered stretch occupies residues 698 to 720 (SAKSSSDFSGNESETRPFNNRRF).

This sequence belongs to the protein kinase superfamily. Ser/Thr protein kinase family. Mostly expressed in apical parts, including flower buds, and particularly in anthers. Also present in root hairs.

It is found in the cell membrane. It carries out the reaction L-seryl-[protein] + ATP = O-phospho-L-seryl-[protein] + ADP + H(+). It catalyses the reaction L-threonyl-[protein] + ATP = O-phospho-L-threonyl-[protein] + ADP + H(+). Regulates the auxin-related MAX (More Axillary Growth) pathway during the shoot branching. In Arabidopsis thaliana (Mouse-ear cress), this protein is Proline-rich receptor-like protein kinase PERK12 (PERK12).